Reading from the N-terminus, the 341-residue chain is Protein-glutamate methylesterase/protein-glutamine glutaminase 2 (341 aa).

The Response regulatory domain occupies 11–126 (RVLVADDSEL…DLGEYGRLIR (116 aa)). The residue at position 62 (Asp-62) is a 4-aspartylphosphate. Positions 152-341 (PARAARVEVV…IPRALRELTR (190 aa)) constitute a CheB-type methylesterase domain. Residues Ser-166, His-193, and Asp-285 contribute to the active site.

It belongs to the CheB family. In terms of processing, phosphorylated by CheA. Phosphorylation of the N-terminal regulatory domain activates the methylesterase activity.

The protein resides in the cytoplasm. It catalyses the reaction [protein]-L-glutamate 5-O-methyl ester + H2O = L-glutamyl-[protein] + methanol + H(+). It carries out the reaction L-glutaminyl-[protein] + H2O = L-glutamyl-[protein] + NH4(+). Its function is as follows. Involved in chemotaxis. Part of a chemotaxis signal transduction system that modulates chemotaxis in response to various stimuli. Catalyzes the demethylation of specific methylglutamate residues introduced into the chemoreceptors (methyl-accepting chemotaxis proteins or MCP) by CheR. Also mediates the irreversible deamidation of specific glutamine residues to glutamic acid. This Anaeromyxobacter dehalogenans (strain 2CP-C) protein is Protein-glutamate methylesterase/protein-glutamine glutaminase 2.